The chain runs to 187 residues: Abscisic acid receptor PYL9 (187 aa).

An START-like region spans residues 27-178 (HLCRENQCTS…NLKSLADVSE (152 aa)). Intrachain disulfides connect Cys-29–Cys-159 and Cys-34–Cys-159. Residues Lys-63, 91 to 96 (ATTSTE), 118 to 124 (RLKNYSS), and Glu-143 contribute to the abscisate site. Positions 87-91 (SGLPA) match the Gate loop motif. The Latch loop motif lies at 117 to 119 (HRL).

It belongs to the PYR/PYL/RCAR abscisic acid intracellular receptor family. In terms of assembly, homodimer. Monomer. Binds ABA on one subunit only. Binds to CARs protein in an ABA-independent manner, both at the plasma membrane and in the nucleus. Binds specifically (+)-ABA but not (-)-ABA. Interacts with HAB1, ABI1 and ABI2, and possibly with other PP2Cs. Interacts with TOPP1. Interacts with DDA1. As to expression, expressed in root tips, vascular tissues, stomata, flowers, pollen tubes and developing seeds.

It localises to the cytoplasm. It is found in the nucleus. The protein localises to the cell membrane. Receptor for abscisic acid (ABA) required for ABA-mediated responses such as stomatal closure and germination inhibition. Inhibits the activity of group-A protein phosphatases type 2C (PP2Cs) in an ABA-independent manner but more efficiently when activated by ABA. Confers enhanced sensitivity to ABA. Can be activated only by (+)-ABA but not by (-)-ABA. The chain is Abscisic acid receptor PYL9 (PYL9) from Arabidopsis thaliana (Mouse-ear cress).